The chain runs to 597 residues: Alpha-1,2-mannosyltransferase MNN2 (597 aa).

Residues 1-12 (MLLTKRFSKLFK) lie on the Cytoplasmic side of the membrane. Residues 13–28 (LTFIVLILCGLFVITN) form a helical; Signal-anchor for type II membrane protein membrane-spanning segment. The Extracellular segment spans residues 29-597 (KYMDENTSVK…STHDKAIAGK (569 aa)). N-linked (GlcNAc...) asparagine glycans are attached at residues Asn-34, Asn-363, and Asn-473.

Belongs to the MNN1/MNT family. Interacts with SVP26.

The protein localises to the golgi apparatus membrane. Its pathway is protein modification; protein glycosylation. Alpha-1,2-mannosyltransferase, responsible for addition of the first alpha-1,2-linked mannose to form the branches on the mannan backbone of oligosaccharides. The protein is Alpha-1,2-mannosyltransferase MNN2 (MNN2) of Saccharomyces cerevisiae (strain ATCC 204508 / S288c) (Baker's yeast).